Reading from the N-terminus, the 624-residue chain is Pentatricopeptide repeat-containing protein At4g31070, mitochondrial (624 aa).

The N-terminal 15 residues, 1 to 15 (MRWVKLGRRVIMSRA), are a transit peptide targeting the mitochondrion. 14 PPR repeats span residues 56–91 (FTAILPSVIKACAFQQEPFLLGAQLHCLCLKAGADC), 92–122 (DTVVSNSLISMYAKFSRKYAVRKVFDEMLHR), 123–157 (DTVSYCSIINSCCQDGLLYEAMKLIKEMYFYGFIP), 158–192 (KSELVASLLALCTRMGSSSKVARMFHALVLVDERM), 195–225 (SVLLSTALVDMYLKFDDHAAAFHVFDQMEVK), 226–260 (NEVSWTAMISGCVANQNYEMGVDLFRAMQRENLRP), 261–296 (NRVTLLSVLPACVELNYGSSLVKEIHGFSFRHGCHA), 297–327 (DERLTAAFMTMYCRCGNVSLSRVLFETSKVR), 328–362 (DVVMWSSMISGYAETGDCSEVMNLLNQMRKEGIEA), 363–397 (NSVTLLAIVSACTNSTLLSFASTVHSQILKCGFMS), 398–428 (HILLGNALIDMYAKCGSLSAAREVFYELTEK), 429–463 (DLVSWSSMINAYGLHGHGSEALEIFKGMIKGGHEV), 464–498 (DDMAFLAILSACNHAGLVEEAQTIFTQAGKYHMPV), and 499–529 (TLEHYACYINLLGRFGKIDDAFEVTINMPMK). The segment at 534 to 610 (IWSSLLSACE…CYGFSKIEPE (77 aa)) is type E motif.

The protein belongs to the PPR family. PCMP-E subfamily.

The protein resides in the mitochondrion. The polypeptide is Pentatricopeptide repeat-containing protein At4g31070, mitochondrial (PCMP-E7) (Arabidopsis thaliana (Mouse-ear cress)).